Here is a 555-residue protein sequence, read N- to C-terminus: 6-phosphofructo-2-kinase/fructose-2,6-bisphosphatase 3 (555 aa).

The interval 1 to 245 (MPLELTQSRV…VYYLMNIHVQ (245 aa)) is 6-phosphofructo-2-kinase. 42–50 (GLPARGKTY) is a binding site for ATP. The beta-D-fructose 6-phosphate site is built by Arg75 and Arg99. The active site involves Asp125. Beta-D-fructose 6-phosphate-binding residues include Thr127 and Arg133. Cys155 is an active-site residue. 164-169 (NIMEVK) contributes to the ATP binding site. Beta-D-fructose 6-phosphate contacts are provided by Lys169, Arg190, and Tyr194. The interval 246–555 (PRTIYLCRHG…CHIFSKFSPY (310 aa)) is fructose-2,6-bisphosphatase. Arg253 lines the beta-D-fructose 2,6-bisphosphate pocket. His254 (tele-phosphohistidine intermediate) is an active-site residue. Beta-D-fructose 2,6-bisphosphate contacts are provided by Asn260 and Gly266. Residue Glu323 is the Proton donor/acceptor of the active site. Beta-D-fructose 2,6-bisphosphate-binding residues include Tyr334, Arg348, Lys352, Tyr363, Gln389, and Arg393. ATP is bound at residue 345 to 348 (YALR). Residues 389-393 (QAVLR) and Tyr425 each bind ATP. Residues 475-504 (KQDAKKGPNPLMRRNSVTPLASPEPTKKPR) are disordered. Phosphoserine; by AMPK and PKA is present on Ser490. Thr492 bears the Phosphothreonine mark. Ser496 is modified (phosphoserine).

This sequence in the C-terminal section; belongs to the phosphoglycerate mutase family. In terms of assembly, homodimer. Forms a heterodimer with PFKFB2. Phosphorylation by AMPK stimulates activity.

The catalysed reaction is beta-D-fructose 2,6-bisphosphate + H2O = beta-D-fructose 6-phosphate + phosphate. The enzyme catalyses beta-D-fructose 6-phosphate + ATP = beta-D-fructose 2,6-bisphosphate + ADP + H(+). Functionally, catalyzes both the synthesis and degradation of fructose 2,6-bisphosphate. In Rattus norvegicus (Rat), this protein is 6-phosphofructo-2-kinase/fructose-2,6-bisphosphatase 3 (Pfkfb3).